The primary structure comprises 317 residues: Pyridoxal 5'-phosphate synthase subunit PdxS (317 aa).

D-ribose 5-phosphate is bound at residue aspartate 47. The active-site Schiff-base intermediate with D-ribose 5-phosphate is the lysine 104. A D-ribose 5-phosphate-binding site is contributed by glycine 176. A D-glyceraldehyde 3-phosphate-binding site is contributed by arginine 188. Residues glycine 237 and 258-259 (GS) contribute to the D-ribose 5-phosphate site.

The protein belongs to the PdxS/SNZ family. In terms of assembly, in the presence of PdxT, forms a dodecamer of heterodimers.

It catalyses the reaction aldehydo-D-ribose 5-phosphate + D-glyceraldehyde 3-phosphate + L-glutamine = pyridoxal 5'-phosphate + L-glutamate + phosphate + 3 H2O + H(+). Its pathway is cofactor biosynthesis; pyridoxal 5'-phosphate biosynthesis. Its function is as follows. Catalyzes the formation of pyridoxal 5'-phosphate from ribose 5-phosphate (RBP), glyceraldehyde 3-phosphate (G3P) and ammonia. The ammonia is provided by the PdxT subunit. Can also use ribulose 5-phosphate and dihydroxyacetone phosphate as substrates, resulting from enzyme-catalyzed isomerization of RBP and G3P, respectively. This is Pyridoxal 5'-phosphate synthase subunit PdxS from Corynebacterium glutamicum (strain ATCC 13032 / DSM 20300 / JCM 1318 / BCRC 11384 / CCUG 27702 / LMG 3730 / NBRC 12168 / NCIMB 10025 / NRRL B-2784 / 534).